We begin with the raw amino-acid sequence, 76 residues long: uncharacterized protein (76 aa).

It belongs to the IIV-6 342R family.

This is an uncharacterized protein from Invertebrate iridescent virus 3 (IIV-3).